Reading from the N-terminus, the 274-residue chain is 2,3,4,5-tetrahydropyridine-2,6-dicarboxylate N-succinyltransferase (274 aa).

The substrate site is built by R104 and D141.

Belongs to the transferase hexapeptide repeat family. In terms of assembly, homotrimer.

It localises to the cytoplasm. The enzyme catalyses (S)-2,3,4,5-tetrahydrodipicolinate + succinyl-CoA + H2O = (S)-2-succinylamino-6-oxoheptanedioate + CoA. It participates in amino-acid biosynthesis; L-lysine biosynthesis via DAP pathway; LL-2,6-diaminopimelate from (S)-tetrahydrodipicolinate (succinylase route): step 1/3. The sequence is that of 2,3,4,5-tetrahydropyridine-2,6-dicarboxylate N-succinyltransferase from Salmonella choleraesuis (strain SC-B67).